The chain runs to 779 residues: Tricorn protease-interacting factor F3 (779 aa).

Substrate-binding positions include glutamate 102 and 231 to 235; that span reads GAMEN. Histidine 266 contacts Zn(2+). The Proton acceptor role is filled by glutamate 267. Positions 270 and 289 each coordinate Zn(2+).

The protein belongs to the peptidase M1 family. Part of the tricorn proteolytic complex. Zn(2+) is required as a cofactor.

Its subcellular location is the cytoplasm. Its function is as follows. Proteases F1, F2 and F3 degrade oligopeptides produced by Tricorn (themselves probably produced by the proteasome), yielding free amino acids. This is Tricorn protease-interacting factor F3 (trf3) from Thermoplasma volcanium (strain ATCC 51530 / DSM 4299 / JCM 9571 / NBRC 15438 / GSS1).